The following is a 373-amino-acid chain: Spermidine/putrescine import ATP-binding protein PotA (373 aa).

Positions 6-236 constitute an ABC transporter domain; the sequence is LSLSNLTKQF…PANLFTARFV (231 aa). 38-45 lines the ATP pocket; that stretch reads GPSGCGKT.

The protein belongs to the ABC transporter superfamily. Spermidine/putrescine importer (TC 3.A.1.11.1) family. As to quaternary structure, the complex is composed of two ATP-binding proteins (PotA), two transmembrane proteins (PotB and PotC) and a solute-binding protein (PotD).

The protein localises to the cell inner membrane. The catalysed reaction is ATP + H2O + polyamine-[polyamine-binding protein]Side 1 = ADP + phosphate + polyamineSide 2 + [polyamine-binding protein]Side 1.. Its function is as follows. Part of the ABC transporter complex PotABCD involved in spermidine/putrescine import. Responsible for energy coupling to the transport system. This chain is Spermidine/putrescine import ATP-binding protein PotA, found in Marinobacter nauticus (strain ATCC 700491 / DSM 11845 / VT8) (Marinobacter aquaeolei).